A 223-amino-acid chain; its full sequence is Cytotoxic T-lymphocyte protein 4 (223 aa).

The signal sequence occupies residues Met-1–Ser-35. The Extracellular segment spans residues Lys-36–Asp-161. In terms of domain architecture, Ig-like V-type spans His-39–Tyr-140. The segment at Val-46 to Ser-50 is homodimerization. Disulfide bonds link Cys-58-Cys-129 and Cys-85-Cys-103. A glycan (N-linked (GlcNAc...) asparagine) is linked at Asn-113. Positions Met-134 to Tyr-139 are important for interaction with CD80 and CD86. An N-linked (GlcNAc...) asparagine glycan is attached at Asn-145. The interval Tyr-150 to Glu-155 is homodimerization. A helical membrane pass occupies residues Phe-162–Thr-182. At Ala-183–Asn-223 the chain is on the cytoplasmic side. A Phosphotyrosine; by TXK and JAK2 modification is found at Tyr-201.

Homodimer; disulfide-linked. Binds to CD80/B7-1 and CD86/B7.2. Interacts with ICOSLG. In terms of processing, N-glycosylation is important for dimerization. Phosphorylation at Tyr-201 prevents binding to the AP-2 adapter complex, blocks endocytosis, and leads to retention of CTLA4 on the cell surface.

It is found in the cell membrane. Its function is as follows. Inhibitory receptor acting as a major negative regulator of T-cell responses. The affinity of CTLA4 for its natural B7 family ligands, CD80 and CD86, is considerably stronger than the affinity of their cognate stimulatory coreceptor CD28. This chain is Cytotoxic T-lymphocyte protein 4 (CTLA4), found in Canis lupus familiaris (Dog).